A 446-amino-acid polypeptide reads, in one-letter code: 5-hydroxytryptamine receptor 7 (446 aa).

Residues 1–84 (MMGVNSSGRP…INYGRAEKVV (84 aa)) are Extracellular-facing. Residues Asn5 and Asn67 are each glycosylated (N-linked (GlcNAc...) asparagine). Residues 85 to 109 (IGSILTLITLLTIAGNCLVVISVCF) traverse the membrane as a helical segment. Residues 110–119 (VKKLRQPSNY) lie on the Cytoplasmic side of the membrane. The chain crosses the membrane as a helical span at residues 120–141 (LIVSLALADLSVAVAVIPFVSV). Residues 142-153 (TDLIGGKWIFGH) are Extracellular-facing. The chain crosses the membrane as a helical span at residues 154–179 (FFCNVFIAMDVMCCTASIMTLCVISI). Cys156 and Cys232 are oxidised to a cystine. Asp163 contributes to the serotonin binding site. Residues 180–199 (DRYLGITRPLTYPVRQNGKC) lie on the Cytoplasmic side of the membrane. A helical membrane pass occupies residues 200 to 220 (MPKMILSVWLLSASITLPPLF). At 221-238 (GWAQNVNDDKVCLISQDF) the chain is on the extracellular side. The helical transmembrane segment at 239-261 (GYTIYSTAVAFYIPMSVMLFMYY) threads the bilayer. Residues 262 to 327 (RIYKAARKSA…SIFKREQKAA (66 aa)) are Cytoplasmic-facing. The chain crosses the membrane as a helical span at residues 328–353 (TTLGIIVGAFTVCWLPFFLLSTARPF). Topologically, residues 354-364 (ICGTACSCIPL) are extracellular. Residues 365 to 388 (WVERTCLWLGYANSLINPFIYAFF) traverse the membrane as a helical segment. The Cytoplasmic portion of the chain corresponds to 389–446 (NRDLRTTYRSLLQCQYRNINRKLSAAGMHEALKLAERPERPECVLQNSDYCRKKGHDS). Residue Cys402 is the site of S-palmitoyl cysteine attachment.

This sequence belongs to the G-protein coupled receptor 1 family.

Its subcellular location is the cell membrane. G-protein coupled receptor for 5-hydroxytryptamine (serotonin), a biogenic hormone that functions as a neurotransmitter, a hormone and a mitogen. Ligand binding causes a conformation change that triggers signaling via guanine nucleotide-binding proteins (G proteins) and modulates the activity of downstream effectors. HTR7 is coupled to G(s) G alpha proteins and mediates activation of adenylate cyclase activity. This Cavia porcellus (Guinea pig) protein is 5-hydroxytryptamine receptor 7 (HTR7).